A 623-amino-acid chain; its full sequence is Lethal(3)malignant brain tumor-like protein 4 (623 aa).

The tract at residues Met-1–Pro-44 is disordered. The segment covering Leu-10–Asp-35 has biased composition (basic and acidic residues). MBT repeat units lie at residues Trp-52–Pro-152, Phe-160–Pro-260, and Phe-269–Pro-364. The CCHHC-type zinc finger occupies Leu-370–Glu-414. Residues Cys-379, Cys-384, His-398, and Cys-404 each coordinate Zn(2+). Residues Trp-543 to Ser-607 enclose the SAM domain.

The protein resides in the nucleus. Putative Polycomb group (PcG) protein. PcG proteins maintain the transcriptionally repressive state of genes, probably via a modification of chromatin, rendering it heritably changed in its expressibility. This chain is Lethal(3)malignant brain tumor-like protein 4 (L3MBTL4), found in Homo sapiens (Human).